The sequence spans 341 residues: L-threonine 3-dehydrogenase (341 aa).

C38 contributes to the Zn(2+) binding site. Catalysis depends on charge relay system residues T40 and H43. H63, E64, C93, C96, C99, and C107 together coordinate Zn(2+). NAD(+)-binding positions include I175, D195, R200, 262–264, and 286–287; these read LGI and IY.

The protein belongs to the zinc-containing alcohol dehydrogenase family. In terms of assembly, homotetramer. Requires Zn(2+) as cofactor.

It localises to the cytoplasm. It catalyses the reaction L-threonine + NAD(+) = (2S)-2-amino-3-oxobutanoate + NADH + H(+). It functions in the pathway amino-acid degradation; L-threonine degradation via oxydo-reductase pathway; glycine from L-threonine: step 1/2. Functionally, catalyzes the NAD(+)-dependent oxidation of L-threonine to 2-amino-3-ketobutyrate. The chain is L-threonine 3-dehydrogenase from Shewanella woodyi (strain ATCC 51908 / MS32).